Here is a 308-residue protein sequence, read N- to C-terminus: Ornithine carbamoyltransferase (308 aa).

Carbamoyl phosphate contacts are provided by residues 56 to 59 (STRT), Gln-83, Arg-107, and 134 to 137 (HPCQ). L-ornithine-binding positions include Asn-165, Asp-225, and 229-230 (SM). Carbamoyl phosphate contacts are provided by residues 266–267 (CL) and Arg-294.

It belongs to the aspartate/ornithine carbamoyltransferase superfamily. OTCase family.

The protein localises to the cytoplasm. The enzyme catalyses carbamoyl phosphate + L-ornithine = L-citrulline + phosphate + H(+). Its pathway is amino-acid biosynthesis; L-arginine biosynthesis; L-arginine from L-ornithine and carbamoyl phosphate: step 1/3. Functionally, reversibly catalyzes the transfer of the carbamoyl group from carbamoyl phosphate (CP) to the N(epsilon) atom of ornithine (ORN) to produce L-citrulline. This Paracoccus denitrificans (strain Pd 1222) protein is Ornithine carbamoyltransferase.